The chain runs to 434 residues: Nuclear receptor subfamily 1 group I member 2 (434 aa).

The nuclear receptor DNA-binding region spans 38 to 107 (PQICRVCGDK…RLRKCLESGM (70 aa)). 2 consecutive NR C4-type zinc fingers follow at residues 41 to 61 (CRVC…CEGC) and 77 to 102 (CPFR…LRKC). The short motif at 66–92 (RRAMKRNARLRCPFRKGACEITRKTRR) is the Bipartite nuclear localization signal element. The interval 108-145 (KKEMIMSDEAVEERRALIKRKKSERTGTQPLGVQGLTE) is hinge. The region spanning 146-433 (EQRMMIRELM…LMQELFGITG (288 aa)) is the NR LBD domain. Hyperforin contacts are provided by residues serine 247, 285–288 (QLRF), and histidine 407.

The protein belongs to the nuclear hormone receptor family. NR1 subfamily. As to quaternary structure, heterodimer with RXR. Interacts with NCOA1. Interacts (via domain NR LBD) with CRY1 and CRY2 in a ligand-dependent manner. Expressed in liver, colon and small intestine.

The protein localises to the nucleus. In terms of biological role, nuclear receptor that binds and is activated by variety of endogenous and xenobiotic compounds. Transcription factor that activates the transcription of multiple genes involved in the metabolism and secretion of potentially harmful xenobiotics, drugs and endogenous compounds. Activated by the antibiotic rifampicin and various plant metabolites, such as hyperforin, guggulipid, colupulone, and isoflavones. Response to specific ligands is species-specific. Activated by naturally occurring steroids, such as pregnenolone and progesterone. Binds to a response element in the promoters of the CYP3A4 and ABCB1/MDR1 genes. This Homo sapiens (Human) protein is Nuclear receptor subfamily 1 group I member 2 (NR1I2).